The primary structure comprises 86 residues: UPF0297 protein LCABL_08470 (86 aa).

Belongs to the UPF0297 family.

The protein is UPF0297 protein LCABL_08470 of Lacticaseibacillus casei (strain BL23) (Lactobacillus casei).